A 596-amino-acid chain; its full sequence is Arrestin domain-containing protein C31A2.12 (596 aa).

Residues 194–211 (AYAIGSYIPIHFVLVPLL) traverse the membrane as a helical segment. Disordered regions lie at residues 363 to 387 (NLDT…TYAS) and 405 to 446 (QQQP…VITR). Phosphothreonine is present on residues Thr-373 and Thr-374. Polar residues-rich tracts occupy residues 405-420 (QQQP…SPSN) and 430-446 (SLGS…VITR). Ser-452, Ser-474, Ser-493, and Ser-497 each carry phosphoserine. Residues 493-596 (SRPPSPGIVT…MLPSGFSRRN (104 aa)) are disordered. Phosphothreonine is present on residues Thr-502 and Thr-507. Residues 504–522 (PQRTSPSFFVSPTESTRQS) show a composition bias toward polar residues. Residue Ser-514 is modified to Phosphoserine. Residues 531 to 555 (HSTSSSSGISPSHSSASLAHLSQAS) are compositionally biased toward low complexity.

It belongs to the arrestin family.

The protein resides in the membrane. The chain is Arrestin domain-containing protein C31A2.12 from Schizosaccharomyces pombe (strain 972 / ATCC 24843) (Fission yeast).